The chain runs to 615 residues: Medium-chain acyl-CoA ligase ACSF2, mitochondrial (615 aa).

The N-terminal 49 residues, 1–49 (MAVYLGMLRLGRLCVASLGARGPRTPLSRPWPNSKLQGVRAFSSGMVDC), are a transit peptide targeting the mitochondrion. Lysine 179 carries the N6-acetyllysine modification. Lysine 182 bears the N6-acetyllysine; alternate mark. Lysine 182 is subject to N6-succinyllysine; alternate. Residue lysine 199 is modified to N6-acetyllysine. 263 to 271 (TSGTTGNPK) is an ATP binding site. N6-acetyllysine is present on residues lysine 340 and lysine 398. Lysine 478 is modified (N6-succinyllysine). ATP contacts are provided by aspartate 493 and arginine 508. Residue lysine 510 is modified to N6-acetyllysine. Lysine 544 and lysine 570 each carry N6-acetyllysine; alternate. 2 positions are modified to N6-succinyllysine; alternate: lysine 544 and lysine 570. Lysine 599 lines the ATP pocket. Lysine 599 is subject to N6-succinyllysine.

Belongs to the ATP-dependent AMP-binding enzyme family.

It is found in the mitochondrion. The enzyme catalyses a medium-chain fatty acid + ATP + CoA = a medium-chain fatty acyl-CoA + AMP + diphosphate. The catalysed reaction is octanoate + ATP + CoA = octanoyl-CoA + AMP + diphosphate. Functionally, acyl-CoA synthases catalyze the initial reaction in fatty acid metabolism, by forming a thioester with CoA. Has some preference toward medium-chain substrates. Plays a role in adipocyte differentiation. The polypeptide is Medium-chain acyl-CoA ligase ACSF2, mitochondrial (Rattus norvegicus (Rat)).